The chain runs to 341 residues: 2-keto-4-carboxy-3-hexenedioate hydratase (341 aa).

Zn(2+) is bound by residues H8 and H10. 71 to 73 (RAS) lines the substrate pocket. H178 is a Zn(2+) binding site. Substrate contacts are provided by Y194 and H223. The active-site Proton donor/acceptor is E284. A substrate-binding site is contributed by R290.

The protein belongs to the metallo-dependent hydrolases superfamily. As to quaternary structure, homodimer. Zn(2+) is required as a cofactor.

The enzyme catalyses (3Z)-2-oxo-4-carboxy-3-hexenedioate + H2O = (2S)-2-hydroxy-4-oxobutane-1,2,4-tricarboxylate. It participates in secondary metabolite metabolism; lignin degradation. Functionally, contributes to the degradation of lignin at the level of the protocatechuate 4,5-cleavage pathway. Catalyzes the hydration of the double bond of (3Z)-2-keto-4-carboxy-3-hexenedioate (KCH) to (4S)-4-carboxy-4-hydroxy-2-oxoadipate (CHA, also named (2S)-2-hydroxy-4-oxobutane-1,2,4-tricarboxylate). Is involved in the catabolism of both vanillate and syringate. The chain is 2-keto-4-carboxy-3-hexenedioate hydratase from Sphingobium sp. (strain NBRC 103272 / SYK-6).